Here is a 1144-residue protein sequence, read N- to C-terminus: MTKRIRQPIIAVLGHVDHGKCLLPDEKVILPEHGPITLKGLFDLAKETVVADNEKEIRKLGAKLTIVGEDGRLRVLESPYVWKVRHRGKMLRVKLKNWHSVSVTPEHPFLTTRGWVRADQLKPGDYVAVPRVIHGNESDERFVSFVYEKLKNDELIAKLRGEVLSKISSEFKGDRAYKVERNVFRWEDIERLNLWDEVERVAFTPRMHRSGKPLHYVKLPRSPEEWEAFFYFAGVMFGDGSQDKIANNDVEVYEELKKLSVLGVAVKRVERTTSYEIELTNGKNALLRLLRVLFEYPERQKAKSIRVPRILFIAPRKYVSRFLRGYFDADGHVSLKDARIEVTSASQEFLEDLSLLLLRFGIVSKIYRSDYTTLVISGRRNLDLFRRYIGFSVKNKAEALEKAIKKSRRSESYPIFEELKRLRLLFGFTRTELNSNVPFYGKYESEEAPSYETLMRILDAIEKGSINLDKKIAVLEGRIRDHNYIKAFEKDGLIKDGKLTELGRELLEVWRNREFDSSDVDYIRNLAENLVFIPVEDIEEFEYEGYVYDVTTETHNFVANGILVHNTTLLDRIRHTNVAGKEAGGITQHIGATEVPIDVVKQLAGPLIKLWKGEIKLPGLLFIDTPGHEAFTSLRARGGSLADLAVLVVDINEGFQPQTIESIEILRRYRTPFIVAANKIDRIKGWVIEEDEPFLVNIKKQDQRAIQELETKLWELIGKFYEMGFNANRFDRVQDFTRELAIVPISAKYGIGIPELLVLIAGLSQKYLEEKLKIEVEGPARGTILEVREEVGLGTTIDVIIYDGTLRKDDTIVVGGKDKAIVTKIRALLKPKPLDEIRDPRFRFDQVDEVTAAAGVKIAAPGLEEALAGSPVIAARSEEEIEKAKQEILSQIQSVVINTGKIGVIVKADTLGSLEALSKELQEKGIPIRKADVGNISKTDVMEALSVKEEEPKYGVVLGFNVKVNEDAEEVANAKGVPIFVGNIIYKLIEDYEAWVKEEEEKRKRELLKNVTFPGVIRLYPDERYVFRRSKPAIVGVEVLEGRIRPGVTLIKETGEKVGVIKSIKNKNDFVQEAKKGDAVAIAIEGAIVGRHIHPGETLYVDLSKNDVIILAKQLKDELEETDIKALKMTAKVKAKEDPFWRAV.

The 131-residue stretch at 232-362 (FAGVMFGDGS…LSLLLLRFGI (131 aa)) folds into the DOD-type homing endonuclease domain. The tr-type G domain maps to 551-768 (TTETHNFVAN…LIAGLSQKYL (218 aa)). GTP is bound by residues 624–628 (DTPGH) and 678–681 (NKID).

The protein belongs to the TRAFAC class translation factor GTPase superfamily. Classic translation factor GTPase family. IF-2 subfamily. In terms of processing, this protein undergoes a protein self splicing that involves a post-translational excision of the intervening region (intein) followed by peptide ligation.

In terms of biological role, function in general translation initiation by promoting the binding of the formylmethionine-tRNA to ribosomes. Seems to function along with eIF-2. This is Probable translation initiation factor IF-2 (infB) from Thermococcus kodakarensis (strain ATCC BAA-918 / JCM 12380 / KOD1) (Pyrococcus kodakaraensis (strain KOD1)).